Reading from the N-terminus, the 602-residue chain is Multidrug and toxin extrusion protein 2 (602 aa).

Over 1-33 (MDSLQDTVALDHGGCCPALSRLVPRGFGTEMWT) the chain is Cytoplasmic. Residues 34–54 (LFALSGPLFLFQVLTFMIYIV) traverse the membrane as a helical segment. The Extracellular segment spans residues 55–66 (STVFCGHLGKVE). The helical transmembrane segment at 67 to 87 (LASVTLAVAFVNVCGVSVGVG) threads the bilayer. Residues 88–119 (LSSACDTLMSQSFGSPNKKHVGVILQRGALVL) are Cytoplasmic-facing. Residues 120 to 140 (LLCCLPCWALFLNTQHILLLF) form a helical membrane-spanning segment. At 141–153 (RQDPDVSRLTQDY) the chain is on the extracellular side. The chain crosses the membrane as a helical span at residues 154–174 (VMIFIPGLPVIFLYNLLAKYL). At 175-219 (QNQGWLKGQEEESPFQTPGLSILHPSHSHLSRASFHLFQKITWPQ) the chain is on the cytoplasmic side. The helical transmembrane segment at 220–240 (VLSGVVGNCVNGVANYALVSV) threads the bilayer. Over 241–248 (LNLGVRGS) the chain is Extracellular. The helical transmembrane segment at 249–269 (AYANIISQFAQTVFLLLYIVL) threads the bilayer. The Cytoplasmic portion of the chain corresponds to 270–289 (KKLHLETWAGWSSQCLQDWG). A helical membrane pass occupies residues 290 to 309 (PFFSLAVPSMLMICVEWWAY). At 310–327 (EIGSFLMGLLSVVDLSAQ) the chain is on the extracellular side. A helical transmembrane segment spans residues 328-348 (AVIYEVATVTYMIPLGLSIGV). The Cytoplasmic segment spans residues 349-368 (CVRVGMALGAADTVQAKRSA). Residues 369 to 389 (VSGVLSIVGISLVLGTLISIL) traverse the membrane as a helical segment. The Extracellular portion of the chain corresponds to 390 to 402 (KNQLGHIFTNDED). Residues 403–423 (VIALVSQVLPVYSVFHVFEAI) traverse the membrane as a helical segment. Residues 424–442 (CCVYGGVLRGTGKQAFGAA) lie on the Cytoplasmic side of the membrane. Residues 443–463 (VNAITYYIIGLPLGILLTFVV) form a helical membrane-spanning segment. Topologically, residues 464 to 466 (RMR) are extracellular. A helical membrane pass occupies residues 467-487 (IMGLWLGMLACVFLATAAFVA). At 488-578 (YTARLDWKLA…LSVKQLVIRR (91 aa)) the chain is on the cytoplasmic side. A disordered region spans residues 503-529 (KHSGRQQQQRAESTATRPGPEKAVLSS). Polar residues predominate over residues 507-518 (RQQQQRAESTAT). The helical transmembrane segment at 579–599 (GAALGAASATLMVGLTVRILA) threads the bilayer. Topologically, residues 600 to 602 (TRH) are extracellular.

It belongs to the multi antimicrobial extrusion (MATE) (TC 2.A.66.1) family. In terms of tissue distribution, high expression in kidney. Very small expression in adrenal gland and lung. High expression in kidney. Very small expression in brain and testis. As to expression, ubiquitously expressed in all tissues examined except the kidney.

The protein localises to the cell membrane. It is found in the apical cell membrane. The enzyme catalyses thiamine(out) + H(+)(in) = thiamine(in) + H(+)(out). It catalyses the reaction estrone 3-sulfate(in) + H(+)(out) = estrone 3-sulfate(out) + H(+)(in). It carries out the reaction creatinine(in) + H(+)(out) = creatinine(out) + H(+)(in). Its function is as follows. Multidrug efflux pump that functions as a H(+)/organic cation antiporter. Mediates the efflux of cationic compounds, such as the model cations, tetraethylammonium (TEA) and 1-methyl-4-phenylpyridinium (MPP+), the platinum-based drug oxaliplatin or weak bases that are positively charged at physiological pH, cimetidine, the platinum-based drugs cisplatin and oxaliplatin or the antidiabetic drug metformin. Mediates the efflux of endogenous compounds such as, creatinine, thiamine and estrone-3-sulfate. Plays a physiological role in the excretion of drugs, toxins and endogenous metabolites through the kidney. In terms of biological role, non-functional protein. The protein is Multidrug and toxin extrusion protein 2 of Homo sapiens (Human).